Reading from the N-terminus, the 97-residue chain is Protein RnfH (97 aa).

It belongs to the UPF0125 (RnfH) family.

In Proteus mirabilis (strain HI4320), this protein is Protein RnfH.